A 262-amino-acid chain; its full sequence is Spindlin-1 (262 aa).

Residues 1–49 (MKTPFGKTPGQRSRADAGHAGVSANMMKKRTSHKKHRTSVGPSKPVSQP) form a disordered region. Glycyl lysine isopeptide (Lys-Gly) (interchain with G-Cter in SUMO2) cross-links involve residues lysine 7 and lysine 28. Basic residues predominate over residues 27 to 38 (MKKRTSHKKHRT). Residue lysine 44 is modified to N6-acetyllysine; alternate. Lysine 44 participates in a covalent cross-link: Glycyl lysine isopeptide (Lys-Gly) (interchain with G-Cter in SUMO2); alternate. Positions 53-116 (IVGCRIQHGW…RVSALEVLPD (64 aa)) are tudor-like domain 1. The tract at residues 93 to 98 (GFDCVY) is histone H3K4me3 and H3R8me2a binding. Phosphoserine; by AURKA occurs at positions 109 and 124. Residues 132 to 193 (MIGKAVEHMF…DYKEGDLRIM (62 aa)) are tudor-like domain 2. Residue glutamate 142 is a region of interest, histone H3K4me3 and H3R8me2a binding. Serine 199 carries the post-translational modification Phosphoserine. Positions 213–262 (LVGKQVEYAKEDGSKRTGMVIHQVEAKPSVYFIKFDDDFHIYVYDLVKTS) are tudor-like domain 3. A histone H3K4me3 and H3R8me2a binding region spans residues 250-252 (DFH).

The protein belongs to the SPIN/STSY family. Homodimer; may form higher-order oligomers. Interacts with TCF7L2/TCF4; the interaction is direct. Interacts with HABP4 and SERBP1. Interacts with SPINDOC; SPINDOC stabilizes SPIN1 and enhances its association with bivalent H3K4me3K9me3 mark. Interacts with SPOCD1; promoting recruitment of PIWIL4 and SPOCD1 to transposons. Post-translationally, phosphorylated during oocyte meiotic maturation.

It is found in the nucleus. Its subcellular location is the nucleolus. In terms of biological role, chromatin reader that specifically recognizes and binds histone H3 both trimethylated at 'Lys-4' and 'Lys-9' (H3K4me3K9me3) and is involved in piRNA-mediated retrotransposon silencing during spermatogenesis. Plays a key role in the initiation of the PIWIL4-piRNA pathway, a pathway that directs transposon DNA methylation and silencing in the male embryonic germ cells, by promoting recruitment of DNA methylation machinery to transposons: binds young, but not old, LINE1 transposons, which are specifically marked with H3K4me3K9me3, and promotes the recruitment of PIWIL4 and SPOCD1 to transposons, leading to piRNA-directed DNA methylation. Also recognizes and binds histone H3 both trimethylated at 'Lys-4' and asymmetrically dimethylated at 'Arg-8' (H3K4me3 and H3R8me2a) and acts as an activator of Wnt signaling pathway downstream of PRMT2. Overexpression induces metaphase arrest and chromosomal instability. Overexpression induces metaphase arrest and chromosomal instability. Localizes to active rDNA loci and promotes the expression of rRNA genes. May play a role in cell-cycle regulation during the transition from gamete to embryo. Involved in oocyte meiotic resumption, a process that takes place before ovulation to resume meiosis of oocytes blocked in prophase I: may act by regulating maternal transcripts to control meiotic resumption. The chain is Spindlin-1 (Spin1) from Rattus norvegicus (Rat).